Reading from the N-terminus, the 456-residue chain is Cell adhesion molecule 1 (456 aa).

The first 47 residues, 1–47 (MASAVLPSGSQCAAAAAVAAAAAPPGLRLRLLLLLLSAAALIPTGDG), serve as a signal peptide directing secretion. The Ig-like V-type domain occupies 48–142 (QNLFTKDVTV…PPQESYTTIT (95 aa)). At 48 to 388 (QNLFTKDVTV…EEGTIGAVDH (341 aa)) the chain is on the extracellular side. C67 and C127 form a disulfide bridge. 4 N-linked (GlcNAc...) asparagine glycosylation sites follow: N70, N104, N116, and N168. Ig-like C2-type domains are found at residues 147–241 (PRNL…RYLE) and 246–332 (PQVH…YMLY). 2 disulfides stabilise this stretch: C169–C223 and C270–C316. Residues N307 and N311 are each glycosylated (N-linked (GlcNAc...) asparagine). Residues 389-409 (AVIGGVVAVVVFAMLCLLIIL) traverse the membrane as a helical segment. Residues 410–456 (GRYFARHKGTYFTHEAKGADDAADADTAIINAEGGQNNSEEKKEYFI) are Cytoplasmic-facing. T436 carries the post-translational modification Phosphothreonine. S448 bears the Phosphoserine mark.

Belongs to the nectin family. In terms of assembly, homodimer (via Ig-like V-type domain). Interacts with FARP1. Interacts (via Ig-like V-type domain) with CRTAM (via Ig-like V-type domain); the interaction competes with CRTAM homodimerization and CADM1 homodimerization. Interacts (via C-terminus) with EPB41L3/DAL1. The interaction with EPB41L3/DAL1 may act to anchor CADM1 to the actin cytoskeleton. Interacts (via C-terminus) with MPP2 (via PDZ domain). Interacts (via C-terminus) with MPP3 (via PDZ domain); this interaction connects CADM1 with DLG1. Interacts (via C-terminus) with PALS2 (via PDZ domain). In terms of processing, N-glycosylated. Glycosylation at Asn-70 and Asn-104 promotes adhesive binding and synapse induction. In terms of tissue distribution, expressed dominantly in epithelial cells but not expressed in fibroblast cells (at protein level). Expressed in the T-cell area of lymph nodes, specifically in CD8+ and CD4- CD8- dendritic cells (at protein level). Expressed in CD8+ dendritic cells in the spleen (at protein level). Expressed in CD103+ dendritic cells in the small intestine lamina propria and mesenteric lymph nodes (at protein level). Expressed in brain, lung, kidney, testis, heart, spleen and liver, but not expressed in skeletal muscle.

It is found in the cell membrane. It localises to the synaptic cell membrane. In terms of biological role, mediates homophilic cell-cell adhesion in a Ca(2+)-independent manner. Also mediates heterophilic cell-cell adhesion with CADM3 and NECTIN3 in a Ca(2+)-independent manner. Interaction with CRTAM promotes natural killer (NK) cell cytotoxicity and interferon-gamma (IFN-gamma) secretion by CD8+ T-cells in vitro as well as NK cell-mediated rejection of tumors expressing CADM1 in vivo. In mast cells, may mediate attachment to and promote communication with nerves. CADM1, together with MITF, is essential for development and survival of mast cells in vivo. By interacting with CRTAM and thus promoting the adhesion between CD8+ T-cells and CD8+ dendritic cells, regulates the retention of activated CD8+ T-cell within the draining lymph node. Required for the intestinal retention of intraepithelial CD4+ CD8+ T-cells and, to a lesser extent, intraepithelial and lamina propria CD8+ T-cells and CD4+ T-cells. Interaction with CRTAM promotes the adhesion to gut-associated CD103+ dendritic cells, which may facilitate the expression of gut-homing and adhesion molecules on T-cells and the conversion of CD4+ T-cells into CD4+ CD8+ T-cells. Acts as a synaptic cell adhesion molecule and plays a role in the formation of dendritic spines and in synapse assembly. May be involved in neuronal migration, axon growth, pathfinding, and fasciculation on the axons of differentiating neurons. May play diverse roles in the spermatogenesis including in the adhesion of spermatocytes and spermatids to Sertoli cells and for their normal differentiation into mature spermatozoa. The polypeptide is Cell adhesion molecule 1 (Mus musculus (Mouse)).